A 333-amino-acid chain; its full sequence is Gramillins biosynthetic cluster protein FGSG_00039 (333 aa).

It functions in the pathway mycotoxin biosynthesis. Functionally, part of the gene cluster that mediates the biosynthesis of gramillins A and B, bicyclic lipopeptides that induce cell death in maize leaves but not in wheat leaves. The nonribosomal peptide synthetase GRA1 incorporates respectively a glutamic adic (Glu), a leucine (Leu), a serine (Ser), a hydroxyglutamine (HOGln), a 2-amino decanoic acid, and 2 cysteins (CysB and CysA). The biosynthesis of 2-amino decanoic acid incorporated in gramillins could be initiated by a fatty acid synthase composed of the alpha and beta subunits FGSG_00036 and FGSG_11656. The cytochrome P450 monooxygenase FGSG_15680 could hydroxylate the fatty acid chain. Subsequent oxidation to the ketone by the oxidoreductase FGSG_00048 and transamination by aminotransferase FGSG_00049 could form 2-amino-decanoic acid. On the other hand, FGSG_15680 could also be responsible for the HO-modified glutamine at the gamma-position. Whether hydroxylation occurs on the fully assembled product or on the Gln residue prior to assembly into the gramillins requires further proof. The thioredoxin FGSG_00043 could also be required for the disulfide-bond formation between CysA and CysB. The specific involvement of the remaining proteins from the cluster is more difficult to discern, but could have broader regulatory (FGSG_00040 and FGSG_11657) or enzymatic functions (FGSG_00044 and FGSG_00045). The final C-domain of GRA1 does not possess the expected sequence of a termination CT domain, often implicated in macrocyclization and release of a cyclopeptidein fungal NRPs; and the thioesterase FGSG_00047 may act in concert with the terminal C-domain of GRA1 to catalyze the formation of the macrocyclic anhydride and release of the products. This chain is Gramillins biosynthetic cluster protein FGSG_00039, found in Gibberella zeae (strain ATCC MYA-4620 / CBS 123657 / FGSC 9075 / NRRL 31084 / PH-1) (Wheat head blight fungus).